Reading from the N-terminus, the 63-residue chain is Cytochrome c oxidase subunit 5C-1 (63 aa).

The helical transmembrane segment at 15–34 (SEVKELIIGSVLGLAAGGLW) threads the bilayer.

The protein belongs to the cytochrome c oxidase subunit 5C family.

The protein resides in the mitochondrion inner membrane. This protein is one of the nuclear-coded polypeptide chains of cytochrome c oxidase, the terminal oxidase in mitochondrial electron transport. This Helianthus annuus (Common sunflower) protein is Cytochrome c oxidase subunit 5C-1 (COX5C1).